The chain runs to 78 residues: Beta-defensin 105 (78 aa).

Positions M1 to A27 are cleaved as a signal peptide. Cystine bridges form between C43-C74, C53-C67, and C57-C73.

This sequence belongs to the beta-defensin family. In terms of tissue distribution, specifically expressed in testis.

It is found in the secreted. In terms of biological role, has antibacterial activity. This chain is Beta-defensin 105 (DEFB105A), found in Homo sapiens (Human).